A 213-amino-acid polypeptide reads, in one-letter code: Small ribosomal subunit protein uS5 (213 aa).

An S5 DRBM domain is found at 49-112 (LEEEVMDVNL…DNAKYNLIKV (64 aa)).

Belongs to the universal ribosomal protein uS5 family. As to quaternary structure, part of the 30S ribosomal subunit. Contacts protein S4.

Functionally, with S4 and S12 plays an important role in translational accuracy. The sequence is that of Small ribosomal subunit protein uS5 from Methanobrevibacter smithii (strain ATCC 35061 / DSM 861 / OCM 144 / PS).